Consider the following 648-residue polypeptide: Acetyl-coenzyme A synthetase (648 aa).

Residues R191–R194, T310, and N334 contribute to the CoA site. Residues G386–P388, D410–T415, D499, and R514 each bind ATP. Residue S522 participates in CoA binding. R525 contributes to the ATP binding site. Residues V536, H538, and I541 each contribute to the Mg(2+) site. R583 lines the CoA pocket. An N6-acetyllysine modification is found at K608.

It belongs to the ATP-dependent AMP-binding enzyme family. Requires Mg(2+) as cofactor. Acetylated. Deacetylation by the SIR2-homolog deacetylase activates the enzyme.

The catalysed reaction is acetate + ATP + CoA = acetyl-CoA + AMP + diphosphate. In terms of biological role, catalyzes the conversion of acetate into acetyl-CoA (AcCoA), an essential intermediate at the junction of anabolic and catabolic pathways. AcsA undergoes a two-step reaction. In the first half reaction, AcsA combines acetate with ATP to form acetyl-adenylate (AcAMP) intermediate. In the second half reaction, it can then transfer the acetyl group from AcAMP to the sulfhydryl group of CoA, forming the product AcCoA. The polypeptide is Acetyl-coenzyme A synthetase (Aeromonas hydrophila subsp. hydrophila (strain ATCC 7966 / DSM 30187 / BCRC 13018 / CCUG 14551 / JCM 1027 / KCTC 2358 / NCIMB 9240 / NCTC 8049)).